Consider the following 313-residue polypeptide: Pseudouridine-5'-phosphate glycosidase (313 aa).

Glu-26 serves as the catalytic Proton donor. Substrate-binding residues include Lys-87 and Ala-107. Asp-139 is a binding site for Mn(2+). Position 141-143 (141-143 (SAD)) interacts with substrate. The active-site Nucleophile is Lys-160.

The protein belongs to the pseudouridine-5'-phosphate glycosidase family. In terms of assembly, homotrimer. Mn(2+) serves as cofactor.

The enzyme catalyses D-ribose 5-phosphate + uracil = psi-UMP + H2O. Catalyzes the reversible cleavage of pseudouridine 5'-phosphate (PsiMP) to ribose 5-phosphate and uracil. Functions biologically in the cleavage direction, as part of a pseudouridine degradation pathway. This chain is Pseudouridine-5'-phosphate glycosidase, found in Corynebacterium aurimucosum (strain ATCC 700975 / DSM 44827 / CIP 107346 / CN-1) (Corynebacterium nigricans).